The sequence spans 553 residues: Rhodopsin kinase GRK7 (553 aa).

Ser36 carries the post-translational modification Phosphoserine; by PKA. Residues 56–176 form the RGS domain; that stretch reads FNSLCEQQPI…LVSPFYDKFL (121 aa). Residues 191–454 form the Protein kinase domain; it reads FEEFRVLGKG…SDDPRKHHFF (264 aa). ATP is bound by residues 197 to 205 and Lys220; that span reads LGKGGFGEV. Asp316 acts as the Proton acceptor in catalysis. One can recognise an AGC-kinase C-terminal domain in the interval 455 to 520; sequence KTINFPRLEA…GAVPIAWQEE (66 aa). Cys550 carries the post-translational modification Cysteine methyl ester. Cys550 is lipidated: S-geranylgeranyl cysteine. A propeptide spans 551–553 (removed in mature form); sequence LLL.

Belongs to the protein kinase superfamily. AGC Ser/Thr protein kinase family. GPRK subfamily. As to quaternary structure, interacts (when prenylated) with PDE6D; this promotes release from membranes. In terms of processing, autophosphorylated in vitro at Ser-490. Phosphorylation at Ser-36 is regulated by light and activated by cAMP.

It is found in the membrane. The enzyme catalyses L-threonyl-[rhodopsin] + ATP = O-phospho-L-threonyl-[rhodopsin] + ADP + H(+). It carries out the reaction L-seryl-[rhodopsin] + ATP = O-phospho-L-seryl-[rhodopsin] + ADP + H(+). With respect to regulation, inhibited by phosphorylation of Ser-36. Functionally, retina-specific kinase involved in the shutoff of the photoresponse and adaptation to changing light conditions via cone opsin phosphorylation, including rhodopsin (RHO). The sequence is that of Rhodopsin kinase GRK7 (GRK7) from Sus scrofa (Pig).